The sequence spans 275 residues: Elongation factor Ts (275 aa).

Positions 76 to 79 (TDFV) are involved in Mg(2+) ion dislocation from EF-Tu.

Belongs to the EF-Ts family.

The protein resides in the cytoplasm. Functionally, associates with the EF-Tu.GDP complex and induces the exchange of GDP to GTP. It remains bound to the aminoacyl-tRNA.EF-Tu.GTP complex up to the GTP hydrolysis stage on the ribosome. The sequence is that of Elongation factor Ts from Rhodococcus erythropolis (strain PR4 / NBRC 100887).